Reading from the N-terminus, the 474-residue chain is Dol-P-Glc:Glc(2)Man(9)GlcNAc(2)-PP-Dol alpha-1,2-glucosyltransferase (474 aa).

Over 1–6 (MAQLEG) the chain is Cytoplasmic. Residues 7 to 27 (YYFSAALSCTFLVSCLLFSAF) traverse the membrane as a helical segment. The Extracellular segment spans residues 28–64 (SRALREPYMDEIFHLPQAQRYCEGRFSLSQWDPMITT). Residues 65–85 (LPGLYLVSVGVVKPASWILGW) form a helical membrane-spanning segment. The Cytoplasmic portion of the chain corresponds to 86–97 (SEHVVCSIGMLR). The helical transmembrane segment at 98–118 (FVNLLFSVGNFYLLYLLFRKI) threads the bilayer. At 119 to 126 (QPRNKASS) the chain is on the extracellular side. The chain crosses the membrane as a helical span at residues 127–147 (SIQRILSTLTLAVFPTLYFFN). Residues 148–150 (FLY) are Cytoplasmic-facing. A helical transmembrane segment spans residues 151–171 (YTEAGSVFFTLFAYLMCLYGN). The Extracellular segment spans residues 172–175 (HRTS). A helical membrane pass occupies residues 176-196 (ALLGFCGFMFRQTNIIWAAFC). The Cytoplasmic portion of the chain corresponds to 197–256 (AGHIIAQKCSEAWKTELQKKKEERLPPAKGPLSELRRVLQFLLMYSMSLKNLSMLFLLTW). A helical membrane pass occupies residues 257-277 (PYMLLLLAFFVFVVVNGGIVV). The Extracellular segment spans residues 278-283 (GDRSSH). A helical transmembrane segment spans residues 284–304 (EACLHFPQLFYFFSFTAFFSF). Over 305 to 317 (PHLLSPTKVKTFL) the chain is Cytoplasmic. Residues 318–338 (SLVWKRRVQFSVITLVSVFLV) form a helical membrane-spanning segment. Residues 339–365 (WKFTYVHKYLLADNRHYTFYVWKRVFQ) lie on the Extracellular side of the membrane. The helical transmembrane segment at 366-386 (RHEIVKYLLVPAYMFAGWAVA) threads the bilayer. Residues 387–392 (DSLKSK) lie on the Cytoplasmic side of the membrane. Residues 393 to 413 (SIFWNLMFFVCLVASTVPQKL) traverse the membrane as a helical segment. Topologically, residues 414–436 (LEFRYFILPYIIYRLNMPLPPIS) are extracellular. The chain crosses the membrane as a helical span at residues 437 to 457 (RLVCELGCYAVVNFLTFYIFL). The Cytoplasmic segment spans residues 458–473 (NKTFQWSDSHDIQRFM).

Belongs to the ALG10 glucosyltransferase family. In terms of assembly, interacts with KCNH1; may regulate KCNH1, possibly by regulating its N-glycosylation. Interacts with KCNH2; may reduce KCNH2 sensitivity to classic proarrhythmic drug blockade, possibly by regulating its N-glycosylation. As to expression, highly expressed in brain, skeletal muscle, uterus, small intestine and liver. Moderately expressed in lung and kidney. Weakly expressed in heart and stomach.

The protein resides in the endoplasmic reticulum membrane. The catalysed reaction is an alpha-D-Glc-(1-&gt;3)-alpha-D-Glc-(1-&gt;3)-alpha-D-Man-(1-&gt;2)-alpha-D-Man-(1-&gt;2)-alpha-D-Man-(1-&gt;3)-[alpha-D-Man-(1-&gt;2)-alpha-D-Man-(1-&gt;3)-[alpha-D-Man-(1-&gt;2)-alpha-D-Man-(1-&gt;6)]-alpha-D-Man-(1-&gt;6)]-beta-D-Man-(1-&gt;4)-beta-D-GlcNAc-(1-&gt;4)-alpha-D-GlcNAc-diphospho-di-trans,poly-cis-dolichol + a di-trans,poly-cis-dolichyl beta-D-glucosyl phosphate = a alpha-D-Glc-(1-&gt;2)-alpha-D-Glc-(1-&gt;3)-alpha-D-Glc-(1-&gt;3)-alpha-D-Man-(1-&gt;2)-alpha-D-Man-(1-&gt;2)-alpha-D-Man-(1-&gt;3)-[alpha-D-Man-(1-&gt;2)-alpha-D-Man-(1-&gt;3)-[alpha-D-Man-(1-&gt;2)-alpha-D-Man-(1-&gt;6)]-alpha-D-Man-(1-&gt;6)]-beta-D-Man-(1-&gt;4)-beta-D-GlcNAc-(1-&gt;4)-alpha-D-GlcNAc-diphospho-di-trans,poly-cis-dolichol + a di-trans,poly-cis-dolichyl phosphate + H(+). The protein operates within protein modification; protein glycosylation. Its function is as follows. Dol-P-Glc:Glc(2)Man(9)GlcNAc(2)-PP-Dol alpha-1,2-glucosyltransferase that operates in the biosynthetic pathway of dolichol-linked oligosaccharides, the glycan precursors employed in protein asparagine (N)-glycosylation. The assembly of dolichol-linked oligosaccharides begins on the cytosolic side of the endoplasmic reticulum membrane and finishes in its lumen. The sequential addition of sugars to dolichol pyrophosphate produces dolichol-linked oligosaccharides containing fourteen sugars, including two GlcNAcs, nine mannoses and three glucoses. Once assembled, the oligosaccharide is transferred from the lipid to nascent proteins by oligosaccharyltransferases. In the lumen of the endoplasmic reticulum, adds the third and last glucose residue from dolichyl phosphate glucose (Dol-P-Glc) onto the lipid-linked oligosaccharide intermediate Glc(2)Man(9)GlcNAc(2)-PP-Dol to produce Glc(3)Man(9)GlcNAc(2)-PP-Dol. The sequence is that of Dol-P-Glc:Glc(2)Man(9)GlcNAc(2)-PP-Dol alpha-1,2-glucosyltransferase from Rattus norvegicus (Rat).